The following is a 448-amino-acid chain: Trigger factor (448 aa).

The PPIase FKBP-type domain occupies 172–257 (GDRVTVDFVG…MKKIEWPHLP (86 aa)).

The protein belongs to the FKBP-type PPIase family. Tig subfamily.

It is found in the cytoplasm. It catalyses the reaction [protein]-peptidylproline (omega=180) = [protein]-peptidylproline (omega=0). In terms of biological role, involved in protein export. Acts as a chaperone by maintaining the newly synthesized protein in an open conformation. Functions as a peptidyl-prolyl cis-trans isomerase. This Burkholderia ambifaria (strain ATCC BAA-244 / DSM 16087 / CCUG 44356 / LMG 19182 / AMMD) (Burkholderia cepacia (strain AMMD)) protein is Trigger factor.